The primary structure comprises 424 residues: Tyrosine--tRNA ligase (424 aa).

Tyrosine 37 contacts L-tyrosine. A 'HIGH' region motif is present at residues 42 to 51; the sequence is PTADSLHLGH. Lysine 144 carries the post-translational modification N6-acetyllysine. L-tyrosine-binding residues include tyrosine 175 and glutamine 179. The 'KMSKS' region motif lies at 235 to 239; sequence KFGKT. Lysine 238 contributes to the ATP binding site. The region spanning 357 to 414 is the S4 RNA-binding domain; the sequence is ADLMQALVDSELQPSRGQARKTIASNAITINGEKQSDPEYFFKEEDRLFGRFTLLRRG.

This sequence belongs to the class-I aminoacyl-tRNA synthetase family. TyrS type 1 subfamily. Homodimer.

Its subcellular location is the cytoplasm. It catalyses the reaction tRNA(Tyr) + L-tyrosine + ATP = L-tyrosyl-tRNA(Tyr) + AMP + diphosphate + H(+). Its function is as follows. Catalyzes the attachment of tyrosine to tRNA(Tyr) in a two-step reaction: tyrosine is first activated by ATP to form Tyr-AMP and then transferred to the acceptor end of tRNA(Tyr). This is Tyrosine--tRNA ligase from Escherichia coli (strain K12 / DH10B).